Reading from the N-terminus, the 163-residue chain is Nucleotide-binding protein Tery_2743 (163 aa).

The protein belongs to the YajQ family.

Nucleotide-binding protein. In Trichodesmium erythraeum (strain IMS101), this protein is Nucleotide-binding protein Tery_2743.